The sequence spans 723 residues: Pescadillo homolog (723 aa).

Residues 380–497 (EAGSLFATFT…KLLRPDLYAP (118 aa)) enclose the BRCT domain. 2 disordered regions span residues 440-471 (RPQL…RVPG) and 501-723 (LPPH…LNKK). Residues 522–551 (LADQEEEGEAERAAEAEEYENDEQEESGEE) are a coiled coil. Acidic residues-rich tracts occupy residues 537-550 (AEEY…ESGE), 588-600 (MAED…DDGD), and 608-622 (FDQD…EDEE). Basic and acidic residues-rich tracts occupy residues 623-634 (EKARSQHQKELE), 670-681 (KKKEEEELERQK), and 700-709 (KKQDAEAEKL). Residues 656-723 (KKQQAPLAKK…RKIEQGLNKK (68 aa)) are a coiled coil. Positions 710-723 (RQKRRKIEQGLNKK) are enriched in basic residues.

Belongs to the pescadillo family. Component of the NOP7 complex, composed of ERB1, NOP7 and YTM1. The complex is held together by ERB1, which interacts with NOP7 via its N-terminal domain and with YTM1 via a high-affinity interaction between the seven-bladed beta-propeller domains of the 2 proteins. The NOP7 complex associates with the 66S pre-ribosome.

The protein resides in the nucleus. It is found in the nucleolus. It localises to the nucleoplasm. Its function is as follows. Component of the NOP7 complex, which is required for maturation of the 25S and 5.8S ribosomal RNAs and formation of the 60S ribosome. The protein is Pescadillo homolog of Ajellomyces capsulatus (strain NAm1 / WU24) (Darling's disease fungus).